We begin with the raw amino-acid sequence, 229 residues long: Cytochrome c oxidase subunit 2 (229 aa).

Over 1–26 (MANWTQLGLQDASSPLMEELIYFHDY) the chain is Mitochondrial intermembrane. A helical transmembrane segment spans residues 27–48 (TLIILTLITILVFYGLASLLFS). Over 49–62 (SNTNRFFLEGQGLE) the chain is Mitochondrial matrix. The chain crosses the membrane as a helical span at residues 63–82 (TVWTIIPAVILIFIALPSLQ). At 83–229 (LLYLMDEVNN…ETWVSNFITE (147 aa)) the chain is on the mitochondrial intermembrane side. Residues histidine 161, cysteine 196, glutamate 198, cysteine 200, histidine 204, and methionine 207 each contribute to the Cu cation site. Mg(2+) is bound at residue glutamate 198.

It belongs to the cytochrome c oxidase subunit 2 family. In terms of assembly, component of the cytochrome c oxidase (complex IV, CIV), a multisubunit enzyme composed of a catalytic core of 3 subunits and several supernumerary subunits. The complex exists as a monomer or a dimer and forms supercomplexes (SCs) in the inner mitochondrial membrane with ubiquinol-cytochrome c oxidoreductase (cytochrome b-c1 complex, complex III, CIII). The cofactor is Cu cation.

It localises to the mitochondrion inner membrane. It carries out the reaction 4 Fe(II)-[cytochrome c] + O2 + 8 H(+)(in) = 4 Fe(III)-[cytochrome c] + 2 H2O + 4 H(+)(out). In terms of biological role, component of the cytochrome c oxidase, the last enzyme in the mitochondrial electron transport chain which drives oxidative phosphorylation. The respiratory chain contains 3 multisubunit complexes succinate dehydrogenase (complex II, CII), ubiquinol-cytochrome c oxidoreductase (cytochrome b-c1 complex, complex III, CIII) and cytochrome c oxidase (complex IV, CIV), that cooperate to transfer electrons derived from NADH and succinate to molecular oxygen, creating an electrochemical gradient over the inner membrane that drives transmembrane transport and the ATP synthase. Cytochrome c oxidase is the component of the respiratory chain that catalyzes the reduction of oxygen to water. Electrons originating from reduced cytochrome c in the intermembrane space (IMS) are transferred via the dinuclear copper A center (CU(A)) of subunit 2 and heme A of subunit 1 to the active site in subunit 1, a binuclear center (BNC) formed by heme A3 and copper B (CU(B)). The BNC reduces molecular oxygen to 2 water molecules using 4 electrons from cytochrome c in the IMS and 4 protons from the mitochondrial matrix. The chain is Cytochrome c oxidase subunit 2 (COII) from Patiria pectinifera (Starfish).